The primary structure comprises 242 residues: Pro-thyrotropin-releasing hormone (242 aa).

The first 24 residues, 1–24, serve as a signal peptide directing secretion; sequence MPGPWLLLALALTLNLTGVPGGRA. Disordered stretches follow at residues 63 to 205 and 220 to 242; these read QGDQ…AYGQ and QGAE…PLEE. Residues 69–79 show a composition bias toward polar residues; that stretch reads HSASQIFQSDW. Proline 86 is subject to Proline amide. Acidic residues predominate over residues 91 to 105; the sequence is EEEEEGVEEEEEEEG. 3 positions are modified to proline amide: proline 116, proline 137, and proline 154. Residues 157 to 167 are compositionally biased toward basic and acidic residues; the sequence is RLADPKAQRSW. The segment covering 168 to 178 has biased composition (acidic residues); the sequence is EEEEEEEEREE. Residues proline 188 and proline 229 each carry the proline amide modification.

The protein belongs to the TRH family. Hypothalamus. Expressed in the hair follicle epithelium (at protein level).

Its subcellular location is the secreted. As a component of the hypothalamic-pituitary-thyroid axis, it controls the secretion of thyroid-stimulating hormone (TSH) and is involved in thyroid hormone synthesis regulation. It also operates as modulator of hair growth. It promotes hair-shaft elongation, prolongs the hair cycle growth phase (anagen) and antagonizes its termination (catagen) by TGFB2. It stimulates proliferation and inhibits apoptosis of hair matrix keratinocytes. This chain is Pro-thyrotropin-releasing hormone (TRH), found in Homo sapiens (Human).